The primary structure comprises 387 residues: Killer cell lectin-like receptor subfamily G member 2 (387 aa).

The segment at 1 to 105 (MEPPQVPAEA…SGEPAPASWA (105 aa)) is disordered. Basic and acidic residues predominate over residues 15-27 (ASEDSPRPERTGW). Phosphoserine is present on serine 143. Positions 155-174 (QWLPRAPSPGSTWSRGSPLA) are disordered. The chain crosses the membrane as a helical span at residues 241-261 (WALVVMAVLLAVCTVAVVALA). Residues 278-383 (SQEQCYYLSE…CSSPRPWVCA (106 aa)) form the C-type lectin domain. 2 disulfide bridges follow: cysteine 299–cysteine 382 and cysteine 361–cysteine 374.

It is found in the membrane. In Mus musculus (Mouse), this protein is Killer cell lectin-like receptor subfamily G member 2 (Klrg2).